The chain runs to 136 residues: Protein NrdI (136 aa).

It belongs to the NrdI family.

Its function is as follows. Probably involved in ribonucleotide reductase function. The protein is Protein NrdI of Salmonella dublin (strain CT_02021853).